Consider the following 154-residue polypeptide: Putative pre-16S rRNA nuclease (154 aa).

The protein belongs to the YqgF nuclease family.

The protein resides in the cytoplasm. In terms of biological role, could be a nuclease involved in processing of the 5'-end of pre-16S rRNA. The chain is Putative pre-16S rRNA nuclease from Rickettsia conorii (strain ATCC VR-613 / Malish 7).